A 638-amino-acid polypeptide reads, in one-letter code: Polypeptide N-acetylgalactosaminyltransferase 15 (638 aa).

Over 1 to 12 (MLPRKRPRSGRS) the chain is Cytoplasmic. The helical; Signal-anchor for type II membrane protein transmembrane segment at 13–35 (RLQFLLLFLTLGCVLMMVILLHP) threads the bilayer. Residues 36 to 638 (PPPTLHQAVT…FDQIHPVDER (603 aa)) lie on the Lumenal side of the membrane. A disordered region spans residues 134 to 157 (KDWRTEEDGEESEEVLTPLGPDSD). Disulfide bonds link cysteine 181–cysteine 411, cysteine 402–cysteine 481, cysteine 516–cysteine 535, cysteine 561–cysteine 574, and cysteine 602–cysteine 619. The catalytic subdomain A stretch occupies residues 190-299 (LPTASVILCF…PGWLEPLLSR (110 aa)). Residues aspartate 231 and arginine 260 each contribute to the substrate site. Mn(2+) is bound by residues aspartate 283, histidine 285, and histidine 416. The catalytic subdomain B stretch occupies residues 357–419 (PVRSPVVPRE…PCSRVGHIYR (63 aa)). Residue arginine 419 participates in substrate binding. The region spanning 503 to 630 (RFSGKLHNTG…GKTSQLWRFD (128 aa)) is the Ricin B-type lectin domain. N-linked (GlcNAc...) asparagine glycosylation occurs at asparagine 573.

Belongs to the glycosyltransferase 2 family. GalNAc-T subfamily. The cofactor is Mn(2+). Specifically expressed in testis.

Its subcellular location is the golgi apparatus membrane. It catalyses the reaction L-seryl-[protein] + UDP-N-acetyl-alpha-D-galactosamine = a 3-O-[N-acetyl-alpha-D-galactosaminyl]-L-seryl-[protein] + UDP + H(+). The enzyme catalyses L-threonyl-[protein] + UDP-N-acetyl-alpha-D-galactosamine = a 3-O-[N-acetyl-alpha-D-galactosaminyl]-L-threonyl-[protein] + UDP + H(+). It functions in the pathway protein modification; protein glycosylation. Catalyzes the initial reaction in O-linked oligosaccharide biosynthesis, the transfer of an N-acetyl-D-galactosamine residue to a serine or threonine residue on the protein receptor. Although it displays a much weaker activity toward all substrates tested compared to GALNT2, it is able to transfer up to seven GalNAc residues to the Muc5AC peptide, suggesting that it can fill vicinal Thr/Ser residues in cooperation with other GALNT proteins. Prefers Muc1a as substrate. This is Polypeptide N-acetylgalactosaminyltransferase 15 (Galnt15) from Mus musculus (Mouse).